A 419-amino-acid chain; its full sequence is POU domain, class 4, transcription factor 1 (419 aa).

The short motif at 57 to 66 (RAEALAAVDI) is the POU-IV box element. Disordered stretches follow at residues 94–117 (STVP…GDLL) and 131–197 (AGGA…HSLG). Residues 99–108 (AHHHHHHHHH) show a composition bias toward basic residues. A compositionally biased stretch (gly residues) spans 131 to 184 (AGGAGAAAGGGGAHDGPGGGGGPGGGGGPGGGPGGGGGGGPGGGGGGPGGGLLG). The POU-specific domain occupies 261-338 (SDTDPRELEA…LQAWLEEAEG (78 aa)). The segment at residues 356–415 (KRKRTSIAAPEKRSLEAYFAVQPRPSSEKIAAIAEKLDLKKNVVRVWFCNQRQKQKRMKF) is a DNA-binding region (homeobox).

The protein belongs to the POU transcription factor family. Class-4 subfamily. In terms of assembly, interacts (via N-terminus) with RIT2; the interaction controls POU4F1 transactivation activity on some neuronal target genes. Isoform 1 interacts with POU4F2; this interaction inhibits both POU4F1 DNA-binding and transcriptional activities. Isoform 1 interacts (C-terminus) with ESR1 (via DNA-binding domain); this interaction decreases the estrogen receptor ESR1 transcriptional activity in a DNA- and ligand 17-beta-estradiol-independent manner. As to expression, expressed in the brain and the retina. Present in the developing brain, spinal cord and eye.

The protein resides in the nucleus. The protein localises to the cytoplasm. Functionally, multifunctional transcription factor with different regions mediating its different effects. Acts by binding (via its C-terminal domain) to sequences related to the consensus octamer motif 5'-ATGCAAAT-3' in the regulatory regions of its target genes. Regulates the expression of specific genes involved in differentiation and survival within a subset of neuronal lineages. It has been shown that activation of some of these genes requires its N-terminal domain, maybe through a neuronal-specific cofactor. Activates BCL2 expression and protects neuronal cells from apoptosis (via the N-terminal domain). Induces neuronal process outgrowth and the coordinate expression of genes encoding synaptic proteins. Exerts its major developmental effects in somatosensory neurons and in brainstem nuclei involved in motor control. Stimulates the binding affinity of the nuclear estrogene receptor ESR1 to DNA estrogen response element (ERE), and hence modulates ESR1-induced transcriptional activity. May positively regulate POU4F2 and POU4F3. Regulates dorsal root ganglion sensory neuron specification and axonal projection into the spinal cord. Plays a role in TNFSF11-mediated terminal osteoclast differentiation. Negatively regulates its own expression interacting directly with a highly conserved autoregulatory domain surrounding the transcription initiation site. Its function is as follows. Able to act as transcription factor, cannot regulate the expression of the same subset of genes than isoform 1. Does not have antiapoptotic effect on neuronal cells. This Homo sapiens (Human) protein is POU domain, class 4, transcription factor 1.